Reading from the N-terminus, the 406-residue chain is Protein phosphatase 2C (406 aa).

The PPM-type phosphatase domain maps to 23–274 (RCGSNCVNGY…DNISCMIVQF (252 aa)). Positions 55, 56, 221, and 265 each coordinate Mn(2+).

The protein belongs to the PP2C family. In terms of assembly, monomer. Requires Mg(2+) as cofactor. It depends on Mn(2+) as a cofactor.

The enzyme catalyses O-phospho-L-seryl-[protein] + H2O = L-seryl-[protein] + phosphate. It carries out the reaction O-phospho-L-threonyl-[protein] + H2O = L-threonyl-[protein] + phosphate. Enzyme with a broad specificity. The sequence is that of Protein phosphatase 2C from Leishmania chagasi.